The sequence spans 330 residues: 4-epi-cubebol synthase ((2E,6E)-farnesyl diphosphate cyclizing) (330 aa).

Residues Asp91 and Glu96 each contribute to the Mg(2+) site. The DDXXXE motif motif lies at 91-96 (DDAFCE). Arg184 is a substrate binding site. Mg(2+) is bound by residues Asn230 and Ser234. Substrate is bound at residue Lys237. Residue Glu238 coordinates Mg(2+). Substrate is bound at residue 316–317 (RY).

This sequence belongs to the terpene synthase family. Mg(2+) serves as cofactor.

The enzyme catalyses (2E,6E)-farnesyl diphosphate + H2O = 4-epi-cubebol + diphosphate. It participates in secondary metabolite biosynthesis; terpenoid biosynthesis. In terms of biological role, catalyzes the conversion of (2E,6E)-farnesyl diphosphate (FPP) to yield the bicyclic sesquiterpenol 4-epi-cubebol via a 1,10-cyclization, which requires the abstraction of the pyrophosphate from FPP to yield a (E,E)-germacradienyl cation. The only accepted substrate is (2E,6E)-farnesyl diphosphate (FPP). The polypeptide is 4-epi-cubebol synthase ((2E,6E)-farnesyl diphosphate cyclizing) (Streptosporangium roseum (strain ATCC 12428 / DSM 43021 / JCM 3005 / KCTC 9067 / NCIMB 10171 / NRRL 2505 / NI 9100)).